The primary structure comprises 342 residues: Dysbindin (342 aa).

Ser-11 is modified (phosphoserine). Residues Leu-83–Lys-180 are a coiled coil. The Nuclear export signal motif lies at Leu-243–Leu-256. The interval Asn-263–Ser-342 is disordered. Over residues Pro-286–Pro-305 the composition is skewed to low complexity. Residues Ser-316, Ser-321, and Ser-340 each carry the phosphoserine modification.

Belongs to the dysbindin family. Interacts (via its coiled coil domain) with KXD1. Interacts with CMYA5, PI4K2 and RNF151. Component of the biogenesis of lysosome-related organelles complex 1 (BLOC-1) composed of at least BLOC1S1, BLOC1S2, BLOC1S3, BLOC1S4, BLOC1S5, BLOC1S6, DTNBP1/BLOC1S7 and SNAPIN/BLOC1S8. Interacts directly in the complex with BLOC1S5, BLOC1S6 and SNAPIN/BLOC1S8. The BLOC-1 complex associates with the AP-3 protein complex and membrane protein cargos. This BLOC-1 complex also associates with the BLOC-2 complex in endosomes. Binds to DTNA and DTNB but may not be a physiological binding partner. Interacts with the DNA-dependent protein kinase complex DNA-PK; the interaction phosphorylates DTNBP1 in vitro. Interacts directly in this complex with XRCC5 and XRCC6. Interacts with AP3M1, AP3B2 and TRIM32. Interacts with XPO1; the interaction exports DTNBP1 out of the nucleus. In terms of processing, ubiquitinated by TRIM32. Ubiquitination leads to DTNBP1 degradation.

The protein resides in the cytoplasm. Its subcellular location is the cytoplasmic vesicle membrane. The protein localises to the cytoplasmic vesicle. It localises to the secretory vesicle. It is found in the synaptic vesicle membrane. The protein resides in the endosome membrane. Its subcellular location is the melanosome membrane. The protein localises to the nucleus. It localises to the postsynaptic density. It is found in the presynaptic cell membrane. The protein resides in the endoplasmic reticulum. In terms of biological role, component of the BLOC-1 complex, a complex that is required for normal biogenesis of lysosome-related organelles (LRO), such as platelet dense granules and melanosomes. In concert with the AP-3 complex, the BLOC-1 complex is required to target membrane protein cargos into vesicles assembled at cell bodies for delivery into neurites and nerve terminals. The BLOC-1 complex, in association with SNARE proteins, is also proposed to be involved in neurite extension. Associates with the BLOC-2 complex to facilitate the transport of TYRP1 independent of AP-3 function. Plays a role in synaptic vesicle trafficking and in neurotransmitter release. Plays a role in the regulation of cell surface exposure of DRD2. May play a role in actin cytoskeleton reorganization and neurite outgrowth. May modulate MAPK8 phosphorylation. Appears to promote neuronal transmission and viability through regulating the expression of SNAP25 and SYN1, modulating PI3-kinase-Akt signaling and influencing glutamatergic release. Regulates the expression of SYN1 through binding to its promoter. Modulates prefrontal cortical activity via the dopamine/D2 pathway. The protein is Dysbindin (DTNBP1) of Bos taurus (Bovine).